Reading from the N-terminus, the 299-residue chain is 4-diphosphocytidyl-2-C-methyl-D-erythritol kinase (299 aa).

Lys33 is a catalytic residue. 115-125 (PLASGLGGGSS) lines the ATP pocket. Asp154 is an active-site residue.

The protein belongs to the GHMP kinase family. IspE subfamily.

The enzyme catalyses 4-CDP-2-C-methyl-D-erythritol + ATP = 4-CDP-2-C-methyl-D-erythritol 2-phosphate + ADP + H(+). It functions in the pathway isoprenoid biosynthesis; isopentenyl diphosphate biosynthesis via DXP pathway; isopentenyl diphosphate from 1-deoxy-D-xylulose 5-phosphate: step 3/6. Functionally, catalyzes the phosphorylation of the position 2 hydroxy group of 4-diphosphocytidyl-2C-methyl-D-erythritol. This Deinococcus geothermalis (strain DSM 11300 / CIP 105573 / AG-3a) protein is 4-diphosphocytidyl-2-C-methyl-D-erythritol kinase.